The chain runs to 114 residues: MAINPIVPIHPLMLQQALNPIQENNPVEGNGPQTPAGAAKVGADFGQFLQEALQKVDNLQKEADVASLGLATGQIQDLHTAVIAMEKAGLSLSLTVDVRNRALDAYHEIMRMQI.

This sequence belongs to the FliE family.

Its subcellular location is the bacterial flagellum basal body. The protein is Flagellar hook-basal body complex protein FliE of Desulfitobacterium hafniense (strain Y51).